The primary structure comprises 127 residues: Small ribosomal subunit protein uS11 (127 aa).

This sequence belongs to the universal ribosomal protein uS11 family. In terms of assembly, part of the 30S ribosomal subunit. Interacts with proteins S7 and S18. Binds to IF-3.

Its function is as follows. Located on the platform of the 30S subunit, it bridges several disparate RNA helices of the 16S rRNA. Forms part of the Shine-Dalgarno cleft in the 70S ribosome. The chain is Small ribosomal subunit protein uS11 from Lactococcus lactis subsp. lactis (strain IL1403) (Streptococcus lactis).